A 387-amino-acid polypeptide reads, in one-letter code: Zinc transporter 7 (387 aa).

Topologically, residues 1 to 37 are cytoplasmic; that stretch reads MLPLSIKDDEYKPAKFNLVVKLSGWFRSILADKTSRN. The helical transmembrane segment at 38–58 threads the bilayer; that stretch reads LFFFLCLNLSFAFVELLYGIW. Over 59–67 the chain is Lumenal; it reads SNSLGLISD. Residues 68-88 traverse the membrane as a helical segment; that stretch reads SFHMFFDCTALLAGLAASVIS. The Cytoplasmic portion of the chain corresponds to 89–102; sequence RWRSNDSFSYGYVR. The helical transmembrane segment at 103–123 threads the bilayer; that stretch reads AEVLAGFVNGLFLIFTAFFIF. Over 124 to 140 the chain is Lumenal; it reads SEGVERALEPPDVHHDR. Residues 141–161 traverse the membrane as a helical segment; it reads LLPVSIAGLLVNLVGIFVFQH. The tract at residues 161–232 is his-rich loop; that stretch reads HGGHGHSHGG…HDDQHCHDDH (72 aa). Residues 162-247 lie on the Cytoplasmic side of the membrane; that stretch reads GGHGHSHGGD…KGSSKQILQG (86 aa). A disordered region spans residues 167–237; the sequence is SHGGDDHGHS…CHDDHTLTPG (71 aa). Over residues 187-201 the composition is skewed to basic residues; it reads GHSHGGHGHSHGGHG. Composition is skewed to basic and acidic residues over residues 202–214 and 221–233; these read HSHE…DHGH and HSHD…DDHT. Residues 248–268 traverse the membrane as a helical segment; sequence VFLHIVADTLGSVGVIISAIL. Topologically, residues 269–273 are lumenal; sequence MQKYD. The chain crosses the membrane as a helical span at residues 274–294; that stretch reads LMIADPICSMLIALLIGVSVV. The Cytoplasmic portion of the chain corresponds to 295-387; sequence PLLRESIGIL…LYVQIEVAAM (93 aa).

It belongs to the cation diffusion facilitator (CDF) transporter (TC 2.A.4) family. SLC30A subfamily. Homooligomer.

It localises to the golgi apparatus membrane. Its subcellular location is the cytoplasmic vesicle. The protein localises to the golgi apparatus. It is found in the trans-Golgi network. The protein resides in the sarcoplasmic reticulum. It localises to the mitochondrion. The catalysed reaction is Zn(2+)(in) = Zn(2+)(out). Zinc ion transporter mediating zinc entry from the cytosol into the lumen of organelles along the secretory pathway. By contributing to zinc ion homeostasis within the early secretory pathway, regulates the activation and folding of enzymes like alkaline phosphatases. This Danio rerio (Zebrafish) protein is Zinc transporter 7 (slc30a7).